The primary structure comprises 512 residues: MTINASNIENSFSKINSHFSKLTDYIWPIKRHEISKFLFITLLMFCILFIQNLIRALKDSIVTTMIGAETISFLKFWGVMPSAFLITVIYVKLVNRMKAENIFYLIISIFLTFFALFAYVIFPNHEMLHLRPVTVHNLTASLPNLKWFILLLSKWSFSLFYIIAELWPNVVFALLFWQFVNNITTVEESKRFYPLFGLLSQTGIYLAGHFLENLSNINYYVTNKFALQSSFHTLSIQIILTIVLILGIVSIKTFWLLNHKVLDKKHMALLRFKTKNKSITIAKSFQMILSSRHIRLIATLLICYGIAINLVEGPWKAAATKIYKTPTEYAAFIGSYLSYTGVFTIFFVLLGSNIVRRMGWFTSAVITPSIVFITGILFFAVNNFEGFAGLIIANFILTDPALVAITIGAIQNVLSKSSKYTLFDSTKEMAYVPLEPEIKISGKAAADVIGTKLGKSGSAFLQSLIFIILPSASYQSISICLMIIFILTCVTWIWATKELNKEYKNSIKFSQK.

The next 11 membrane-spanning stretches (helical) occupy residues 34–54, 71–91, 102–122, 157–177, 192–212, 231–251, 296–316, 330–350, 361–381, 390–410, and 476–496; these read ISKF…QNLI, ISFL…VIYV, IFYL…YVIF, FSLF…LLFW, FYPL…HFLE, FHTL…IVSI, LIAT…GPWK, AAFI…FVLL, FTSA…FFAV, LIIA…IGAI, and SISI…IWAT.

It belongs to the ADP/ATP translocase tlc family.

Its subcellular location is the cell membrane. Functionally, provides the rickettsial cell with host ATP in exchange for rickettsial ADP. This is an obligate exchange system. This energy acquiring activity is an important component of rickettsial parasitism. The sequence is that of ADP,ATP carrier protein 4 (tlcD) from Rickettsia prowazekii (strain Madrid E).